Here is a 199-residue protein sequence, read N- to C-terminus: Ribosome maturation factor RimM (199 aa).

The PRC barrel domain occupies 93 to 169; sequence DDEYYHADLI…IELPDEIDGE (77 aa). Residues 164–199 are disordered; the sequence is DEIDGEDRASADESASAEDDAAAPNSARHPRESGDP.

Belongs to the RimM family. Binds ribosomal protein uS19.

The protein resides in the cytoplasm. An accessory protein needed during the final step in the assembly of 30S ribosomal subunit, possibly for assembly of the head region. Essential for efficient processing of 16S rRNA. May be needed both before and after RbfA during the maturation of 16S rRNA. It has affinity for free ribosomal 30S subunits but not for 70S ribosomes. The chain is Ribosome maturation factor RimM from Bradyrhizobium sp. (strain ORS 278).